Consider the following 182-residue polypeptide: MAQHQHSPQRPRDQDNTRPHDQYGIVFSVSGDDVARKQGDSFSQPDPTVATMGSVDTVTIGEALEATALSLGDKPVDRRDAAAIQAAETRATGESKGRPGGLAVAAQAAATTNEQTVSEEDKVNIADILTDAAERLPGDKVVTSEDAEAVVGAELRSSSEMKTTPGGVADSMSAGARLNQQL.

The segment at 1 to 51 (MAQHQHSPQRPRDQDNTRPHDQYGIVFSVSGDDVARKQGDSFSQPDPTVAT) is disordered. The Nuclear localization signal (NLS) motif lies at 7 to 11 (SPQRP). Positions 10-21 (RPRDQDNTRPHD) are enriched in basic and acidic residues. SMP domains follow at residues 58-115 (VTIG…TNEQ) and 123-181 (VNIA…LNQQ). The tract at residues 145–182 (EDAEAVVGAELRSSSEMKTTPGGVADSMSAGARLNQQL) is disordered.

The protein belongs to the LEA type SMP family.

The protein resides in the cytoplasm. It is found in the nucleus. In terms of biological role, LEA proteins are late embryonic proteins abundant in higher plant seed embryos. The function of those proteins is not known. The protein is Late embryogenesis abundant protein 3 of Arabidopsis thaliana (Mouse-ear cress).